Reading from the N-terminus, the 511-residue chain is Probable cytochrome P450 4ac2 (511 aa).

Heme is bound by residues glutamate 318 and cysteine 455.

The protein belongs to the cytochrome P450 family. It depends on heme as a cofactor.

Its subcellular location is the endoplasmic reticulum membrane. It localises to the microsome membrane. Its function is as follows. May be involved in the metabolism of insect hormones and in the breakdown of synthetic insecticides. In Drosophila melanogaster (Fruit fly), this protein is Probable cytochrome P450 4ac2 (Cyp4ac2).